The chain runs to 213 residues: MVERMKKDTGDETKTKVQEEPPSPSPPPPPPPRRERQKQHYWVPEREKKQIERHIHRTSHAREFTDKPWRQPRLFSETTLPKIVLEEESIPQAQKRRQAHERELLQIKDHRERMIRGRELLQQRLKDRILRKSPSQIPLPEKRDQVKKQKKEFEKVVAYPLVQPSCTSRIKVDVLMEKSQDEEDLSTIIKPFGRRFLAVPPFLRTQIGKIKDL.

Basic and acidic residues predominate over residues 1–19; that stretch reads MVERMKKDTGDETKTKVQE. The segment at 1–70 is disordered; the sequence is MVERMKKDTG…AREFTDKPWR (70 aa). A compositionally biased stretch (pro residues) spans 21–31; that stretch reads PPSPSPPPPPP. Composition is skewed to basic and acidic residues over residues 43-53 and 60-69; these read VPEREKKQIER and HAREFTDKPW.

Expressed during spermatogenesis, initially at pachytene stage with abundance increasing in round spermatids and decreasing again during spermatid elongation.

Functionally, may be involved in male sterility. This is RNA polymerase I subunit H from Mus musculus (Mouse).